We begin with the raw amino-acid sequence, 253 residues long: UPF0246 protein Swit_4565 (253 aa).

This sequence belongs to the UPF0246 family.

This Rhizorhabdus wittichii (strain DSM 6014 / CCUG 31198 / JCM 15750 / NBRC 105917 / EY 4224 / RW1) (Sphingomonas wittichii) protein is UPF0246 protein Swit_4565.